A 155-amino-acid polypeptide reads, in one-letter code: 6,7-dimethyl-8-ribityllumazine synthase (155 aa).

5-amino-6-(D-ribitylamino)uracil contacts are provided by residues W24, 58 to 60 (AFE), and 82 to 84 (AVI). Position 87-88 (87-88 (GT)) interacts with (2S)-2-hydroxy-3-oxobutyl phosphate. H90 functions as the Proton donor in the catalytic mechanism. F115 contributes to the 5-amino-6-(D-ribitylamino)uracil binding site. R129 lines the (2S)-2-hydroxy-3-oxobutyl phosphate pocket.

It belongs to the DMRL synthase family. In terms of assembly, forms an icosahedral capsid composed of 60 subunits, arranged as a dodecamer of pentamers.

The enzyme catalyses (2S)-2-hydroxy-3-oxobutyl phosphate + 5-amino-6-(D-ribitylamino)uracil = 6,7-dimethyl-8-(1-D-ribityl)lumazine + phosphate + 2 H2O + H(+). It participates in cofactor biosynthesis; riboflavin biosynthesis; riboflavin from 2-hydroxy-3-oxobutyl phosphate and 5-amino-6-(D-ribitylamino)uracil: step 1/2. Functionally, catalyzes the formation of 6,7-dimethyl-8-ribityllumazine by condensation of 5-amino-6-(D-ribitylamino)uracil with 3,4-dihydroxy-2-butanone 4-phosphate. This is the penultimate step in the biosynthesis of riboflavin. The sequence is that of 6,7-dimethyl-8-ribityllumazine synthase from Saccharophagus degradans (strain 2-40 / ATCC 43961 / DSM 17024).